A 179-amino-acid chain; its full sequence is Alpha-S2-casein-like A (179 aa).

Positions Met-1–Ala-15 are cleaved as a signal peptide. Phosphoserine occurs at positions 24 and 25. Residues Phe-44–Glu-121 form a disordered region. Residues Ile-63–Lys-74 are compositionally biased toward basic and acidic residues. The span at Pro-93–Gln-110 shows a compositional bias: polar residues.

It belongs to the alpha-casein family. As to expression, mammary gland specific. Secreted in milk.

It localises to the secreted. Important role in the capacity of milk to transport calcium phosphate. The chain is Alpha-S2-casein-like A (Csn1s2a) from Rattus norvegicus (Rat).